A 602-amino-acid polypeptide reads, in one-letter code: MPSERQKYIRNFCIIAHIDHGKSTLADRLLEKTGVLTSREMQEQVLDNMELERERGITIKAQAVRMVYKASDGHEYIYNLIDTPGHVDFNYEVSRSLAACEGAILVVDAAQGIEAQTLANVYLALEHNLEIMPVINKIDLPSAQPEVVKKEIEDVIGLDASQAPMISAKNGLNIEEVLEKIVDMIPCPEADEKAPLRALIFDSFYDSYKGVIVYIRVKEGTLKTGDTIRLMYTKKEFLVTELGYLKPGGLSPADELKAGDVGYIAASIKNVRDTRVGDTITLVENPAKEPLPGYKKVNSMVFCGIYPADGSKYGDLRDALDRLQLNDAALTFEPESSVALGFGFRCGFLGLLHMEIIQERLEREYNFDLVTTAPSVIYRVTTTDGDVIEIDNPTNLPPVTEIDSMEEPMVKATIMVPTEYVGNIMDLSQERRGIYKDMSYIDEGRAMLTYEMPLNEIIYDFFDALKSRTKGYASFDYELVGYKESDLVKLDIMLNGEIVDALSFIVHREKSVARGRRMAEKLKESIPRQMFEIPIQACIGGKIIARETVKAFRKDVLSKCYGGDISRKRKLLEKQKEGKKRMRQVGSVEVPQEAFMSVLKLD.

The tr-type G domain maps to 7 to 189 (KYIRNFCIIA…KIVDMIPCPE (183 aa)). GTP is bound by residues 19-24 (DHGKST) and 136-139 (NKID).

Belongs to the TRAFAC class translation factor GTPase superfamily. Classic translation factor GTPase family. LepA subfamily.

The protein localises to the cell membrane. It carries out the reaction GTP + H2O = GDP + phosphate + H(+). Its function is as follows. Required for accurate and efficient protein synthesis under certain stress conditions. May act as a fidelity factor of the translation reaction, by catalyzing a one-codon backward translocation of tRNAs on improperly translocated ribosomes. Back-translocation proceeds from a post-translocation (POST) complex to a pre-translocation (PRE) complex, thus giving elongation factor G a second chance to translocate the tRNAs correctly. Binds to ribosomes in a GTP-dependent manner. This chain is Elongation factor 4, found in Ruminiclostridium cellulolyticum (strain ATCC 35319 / DSM 5812 / JCM 6584 / H10) (Clostridium cellulolyticum).